A 236-amino-acid polypeptide reads, in one-letter code: UPF0257 lipoprotein YnfC (236 aa).

The signal sequence occupies residues 1 to 16; sequence MKYKLLPCLLAILLTG. Cys17 carries N-palmitoyl cysteine lipidation. Residue Cys17 is the site of S-diacylglycerol cysteine attachment.

The protein belongs to the UPF0257 family.

It is found in the cell membrane. In Escherichia coli O81 (strain ED1a), this protein is UPF0257 lipoprotein YnfC.